A 452-amino-acid polypeptide reads, in one-letter code: GATA-binding factor 2 (452 aa).

The interval 130–182 is disordered; sequence GGSLYPGTGSSACPSSSHSSPHLFGFPPTPPKDVSPDPGPASPPSSSRLEDKD. Over residues 139 to 151 the composition is skewed to low complexity; it reads SSACPSSSHSSPH. Pro residues predominate over residues 156 to 172; it reads PPTPPKDVSPDPGPASP. 2 consecutive GATA-type zinc fingers follow at residues 267–291 and 321–345; these read CVNCGATATPLWRRDGTGHYLCNAC and CANCQTSTTTLWRRNANGDPVCNAC. The span at 426–438 shows a compositional bias: polar residues; sequence QTPTPIHPSSSLS. The tract at residues 426–452 is disordered; it reads QTPTPIHPSSSLSFGHPHHSSMVTAMG.

Expressed in the developing ventral blood island, and in the embryonic nervous system.

It is found in the nucleus. In Xenopus laevis (African clawed frog), this protein is GATA-binding factor 2 (gata2).